A 227-amino-acid chain; its full sequence is Translation initiation factor 6 (227 aa).

This sequence belongs to the eIF-6 family.

Its function is as follows. Binds to the 50S ribosomal subunit and prevents its association with the 30S ribosomal subunit to form the 70S initiation complex. The protein is Translation initiation factor 6 of Staphylothermus marinus (strain ATCC 43588 / DSM 3639 / JCM 9404 / F1).